Reading from the N-terminus, the 440-residue chain is Phenylacetate-coenzyme A ligase (440 aa).

This sequence belongs to the phenylacetyl-CoA ligase family. As to quaternary structure, monomer.

The catalysed reaction is 2-phenylacetate + ATP + CoA = phenylacetyl-CoA + AMP + diphosphate. It functions in the pathway aromatic compound metabolism; phenylacetate degradation. With respect to regulation, inhibition of activity is observed in the presence of a 1 mM of the divalent cations zinc, copper, and nickel. In terms of biological role, catalyzes the activation of phenylacetic acid (PA) to phenylacetyl-CoA (PA-CoA). Involved in the phenylalanine metabolism. This chain is Phenylacetate-coenzyme A ligase (paaK), found in Aromatoleum evansii (Azoarcus evansii).